The primary structure comprises 274 residues: Large ribosomal subunit protein uL2cz (274 aa).

Disordered stretches follow at residues 1–25 (MAIH…VKSN) and 224–274 (NPVD…RRSK). Residues 7-25 (KTSTPSTRNGTVDSQVKSN) show a composition bias toward polar residues.

The protein belongs to the universal ribosomal protein uL2 family. In terms of assembly, part of the 50S ribosomal subunit.

The protein localises to the plastid. It is found in the chloroplast. This is Large ribosomal subunit protein uL2cz (rpl2-A) from Atropa belladonna (Belladonna).